The sequence spans 315 residues: GTP cyclohydrolase MptA (315 aa).

The protein belongs to the GTP cyclohydrolase IV family. In terms of assembly, homodimer. The cofactor is Fe(2+).

The catalysed reaction is GTP + H2O = 7,8-dihydroneopterin 2',3'-cyclic phosphate + formate + diphosphate + H(+). Its pathway is cofactor biosynthesis; 5,6,7,8-tetrahydromethanopterin biosynthesis. In terms of biological role, converts GTP to 7,8-dihydro-D-neopterin 2',3'-cyclic phosphate, the first intermediate in the biosynthesis of coenzyme methanopterin. This is GTP cyclohydrolase MptA from Methanococcus maripaludis (strain C7 / ATCC BAA-1331).